Consider the following 572-residue polypeptide: Arginine--tRNA ligase (572 aa).

Residues 122-132 carry the 'HIGH' region motif; the sequence is PNLAKEMHVGH.

The protein belongs to the class-I aminoacyl-tRNA synthetase family. As to quaternary structure, monomer.

The protein localises to the cytoplasm. It catalyses the reaction tRNA(Arg) + L-arginine + ATP = L-arginyl-tRNA(Arg) + AMP + diphosphate. This Neisseria gonorrhoeae (strain NCCP11945) protein is Arginine--tRNA ligase.